The chain runs to 35 residues: Photosystem II reaction center protein T (35 aa).

Residues 3–23 traverse the membrane as a helical segment; sequence ALVYTFLLISTLGIIFFAIFF.

Belongs to the PsbT family. PSII is composed of 1 copy each of membrane proteins PsbA, PsbB, PsbC, PsbD, PsbE, PsbF, PsbH, PsbI, PsbJ, PsbK, PsbL, PsbM, PsbT, PsbY, PsbZ, Psb30/Ycf12, at least 3 peripheral proteins of the oxygen-evolving complex and a large number of cofactors. It forms dimeric complexes.

The protein localises to the plastid. The protein resides in the chloroplast thylakoid membrane. Its function is as follows. Found at the monomer-monomer interface of the photosystem II (PS II) dimer, plays a role in assembly and dimerization of PSII. PSII is a light-driven water plastoquinone oxidoreductase, using light energy to abstract electrons from H(2)O, generating a proton gradient subsequently used for ATP formation. This is Photosystem II reaction center protein T from Aristolochia macrophylla (Dutchman's pipe vine).